A 292-amino-acid polypeptide reads, in one-letter code: Protein/nucleic acid deglycase HchA (292 aa).

Polar residues predominate over residues 1-12; it reads MSQDVNELSKQP. The segment at 1 to 23 is disordered; the sequence is MSQDVNELSKQPTPDKAEDNAFF. Cysteine 190 acts as the Nucleophile in catalysis.

The protein belongs to the peptidase C56 family. HchA subfamily.

Its subcellular location is the cytoplasm. The catalysed reaction is N(omega)-(1-hydroxy-2-oxopropyl)-L-arginyl-[protein] + H2O = lactate + L-arginyl-[protein] + H(+). It carries out the reaction N(6)-(1-hydroxy-2-oxopropyl)-L-lysyl-[protein] + H2O = lactate + L-lysyl-[protein] + H(+). The enzyme catalyses S-(1-hydroxy-2-oxopropyl)-L-cysteinyl-[protein] + H2O = lactate + L-cysteinyl-[protein] + H(+). It catalyses the reaction N(omega)-(1-hydroxy-2-oxoethyl)-L-arginyl-[protein] + H2O = L-arginyl-[protein] + glycolate + H(+). The catalysed reaction is N(6)-(1-hydroxy-2-oxoethyl)-L-lysyl-[protein] + H2O = glycolate + L-lysyl-[protein] + H(+). It carries out the reaction S-(1-hydroxy-2-oxoethyl)-L-cysteinyl-[protein] + H2O = glycolate + L-cysteinyl-[protein] + H(+). The enzyme catalyses N(2)-(1-hydroxy-2-oxopropyl)-dGTP + H2O = lactate + dGTP + H(+). It catalyses the reaction N(2)-(1-hydroxy-2-oxopropyl)-GTP + H2O = lactate + GTP + H(+). The catalysed reaction is N(2)-(1-hydroxy-2-oxopropyl)-GDP + H2O = lactate + GDP + H(+). It carries out the reaction N(2)-(1-hydroxy-2-oxopropyl)-GMP + H2O = lactate + GMP + H(+). The enzyme catalyses N(2)-(1-hydroxy-2-oxoethyl)-dGTP + H2O = dGTP + glycolate + H(+). It catalyses the reaction N(2)-(1-hydroxy-2-oxoethyl)-GTP + H2O = glycolate + GTP + H(+). The catalysed reaction is N(2)-(1-hydroxy-2-oxoethyl)-GDP + H2O = glycolate + GDP + H(+). It carries out the reaction N(2)-(1-hydroxy-2-oxoethyl)-GMP + H2O = glycolate + GMP + H(+). The enzyme catalyses an N(2)-(1-hydroxy-2-oxopropyl)-guanosine in RNA + H2O = a guanosine in RNA + lactate + H(+). It catalyses the reaction an N(2)-(1-hydroxy-2-oxopropyl)-2'-deoxyguanosine in DNA + H2O = a 2'-deoxyguanosine in DNA + lactate + H(+). The catalysed reaction is an N(2)-(1-hydroxy-2-oxoethyl)-guanosine in RNA + H2O = a guanosine in RNA + glycolate + H(+). It carries out the reaction an N(2)-(1-hydroxy-2-oxoethyl)-2'-deoxyguanosine in DNA + H2O = a 2'-deoxyguanosine in DNA + glycolate + H(+). Functionally, protein and nucleotide deglycase that catalyzes the deglycation of the Maillard adducts formed between amino groups of proteins or nucleotides and reactive carbonyl groups of glyoxals. Thus, functions as a protein deglycase that repairs methylglyoxal- and glyoxal-glycated proteins, and releases repaired proteins and lactate or glycolate, respectively. Deglycates cysteine, arginine and lysine residues in proteins, and thus reactivates these proteins by reversing glycation by glyoxals. Acts on early glycation intermediates (hemithioacetals and aminocarbinols), preventing the formation of Schiff bases and advanced glycation endproducts (AGE). Also functions as a nucleotide deglycase able to repair glycated guanine in the free nucleotide pool (GTP, GDP, GMP, dGTP) and in DNA and RNA. Is thus involved in a major nucleotide repair system named guanine glycation repair (GG repair), dedicated to reversing methylglyoxal and glyoxal damage via nucleotide sanitization and direct nucleic acid repair. Plays an important role in protecting cells from carbonyl stress. The protein is Protein/nucleic acid deglycase HchA of Staphylococcus aureus (strain Newman).